The primary structure comprises 682 residues: Glutamine--fructose-6-phosphate aminotransferase [isomerizing] 2 (682 aa).

The active-site For GATase activity is Cys-2. The Glutamine amidotransferase type-2 domain maps to 2-288 (CGIFAYMNYR…DDDIAAVADG (287 aa)). Phosphoserine is present on Ser-244. SIS domains lie at 360 to 499 (HLKE…DRIS) and 531 to 672 (LALE…VDFP). Residues 377 to 378 (TS), 422 to 424 (SQS), Thr-427, and His-578 contribute to the substrate site.

Highest levels of expression in heart, placenta, and spinal cord.

The catalysed reaction is D-fructose 6-phosphate + L-glutamine = D-glucosamine 6-phosphate + L-glutamate. It participates in nucleotide-sugar biosynthesis; UDP-N-acetyl-alpha-D-glucosamine biosynthesis; alpha-D-glucosamine 6-phosphate from D-fructose 6-phosphate: step 1/1. Controls the flux of glucose into the hexosamine pathway. Most likely involved in regulating the availability of precursors for N- and O-linked glycosylation of proteins. The polypeptide is Glutamine--fructose-6-phosphate aminotransferase [isomerizing] 2 (GFPT2) (Homo sapiens (Human)).